The sequence spans 393 residues: Putative F-box protein At1g55070 (393 aa).

An F-box domain is found at 29–74 (GEYFDRIPADLVIKILSKLSAKSMAKCRCVCKLLSSIIRQPNYNQL).

This chain is Putative F-box protein At1g55070, found in Arabidopsis thaliana (Mouse-ear cress).